Reading from the N-terminus, the 617-residue chain is tRNA-dihydrouridine(47) synthase [NAD(P)(+)] (617 aa).

A C3H1-type zinc finger spans residues lysine 42–glutamate 70. Residues glutamate 160–serine 193 form a disordered region. FMN contacts are provided by residues proline 245–threonine 247 and glutamine 308. The active-site Proton donor is the cysteine 340. FMN contacts are provided by residues lysine 380, histidine 411, asparagine 460–aspartate 462, and alanine 483–arginine 484.

This sequence belongs to the Dus family. Dus3 subfamily. The cofactor is FMN.

It is found in the cytoplasm. The protein resides in the nucleus. The catalysed reaction is 5,6-dihydrouridine(47) in tRNA + NAD(+) = uridine(47) in tRNA + NADH + H(+). It carries out the reaction 5,6-dihydrouridine(47) in tRNA + NADP(+) = uridine(47) in tRNA + NADPH + H(+). The enzyme catalyses a 5,6-dihydrouridine in mRNA + NAD(+) = a uridine in mRNA + NADH + H(+). It catalyses the reaction a 5,6-dihydrouridine in mRNA + NADP(+) = a uridine in mRNA + NADPH + H(+). Functionally, catalyzes the synthesis of dihydrouridine, a modified base, in various RNAs, such as tRNAs and mRNAs. Modifies the uridine in position 47 (U47) in the D-loop of tRNAs. Also able to mediate formation of dihydrouridine outside of the D-loop of tRNAs. Catalyzes the synthesis of dihydrouridine in some mRNAs, thereby affecting their translation. Dus3-mediated dihydrouridylation of the mRNA encoding alpha-tubulin nda2 is required for meiotic chromosome segregation. This chain is tRNA-dihydrouridine(47) synthase [NAD(P)(+)], found in Schizosaccharomyces pombe (strain 972 / ATCC 24843) (Fission yeast).